Here is a 440-residue protein sequence, read N- to C-terminus: tRNA(Ile)-lysidine synthase (440 aa).

Residue 31–36 (SGGADS) coordinates ATP.

The protein belongs to the tRNA(Ile)-lysidine synthase family.

It localises to the cytoplasm. It carries out the reaction cytidine(34) in tRNA(Ile2) + L-lysine + ATP = lysidine(34) in tRNA(Ile2) + AMP + diphosphate + H(+). Ligates lysine onto the cytidine present at position 34 of the AUA codon-specific tRNA(Ile) that contains the anticodon CAU, in an ATP-dependent manner. Cytidine is converted to lysidine, thus changing the amino acid specificity of the tRNA from methionine to isoleucine. This Borreliella burgdorferi (strain ATCC 35210 / DSM 4680 / CIP 102532 / B31) (Borrelia burgdorferi) protein is tRNA(Ile)-lysidine synthase.